Here is a 198-residue protein sequence, read N- to C-terminus: Host transcription reprogramming factor 1 (198 aa).

Residues 1 to 19 form the signal peptide; sequence MQLSNFLSIWALVAMGATA. 2 disordered regions span residues 21-59 and 71-198; these read PMPSGSAPGNPFADGEAYGARPSQGLTPVPKVHDGSYHS and ERLA…PVQL. Residues 58 to 81 form a C2H2-type zinc finger; that stretch reads HSCETCAAPFRTEERLAAHRQADH. Composition is skewed to basic and acidic residues over residues 71–80, 104–128, and 167–177; these read ERLAAHRQAD, TSERERLDRLASRVGEDYVEKRSQE, and KLDKPTRKEQY.

It is found in the secreted. Its subcellular location is the host nucleus. Functionally, secreted effector that translocates into the nuclei of host cells to reprogram the expression of immunity-associated genes by binding to effector binding elements (EBEs) in rice. Binds the 5'-CAATCTTC-3' EBE of promoters from targeted rice genes and probably recruits a yet to be determined host repressor. Causes ambivalent immunity with increased susceptibility to the hemibiotrophic pathogens Magnaporthe oryzae and Xanthomonas oryzae pv. oryzae, but enhances resistance to Cochliobolus miyabeanus, a necrotrophic pathogen. In Pyricularia oryzae (strain 70-15 / ATCC MYA-4617 / FGSC 8958) (Rice blast fungus), this protein is Host transcription reprogramming factor 1.